Here is a 202-residue protein sequence, read N- to C-terminus: Endothelin-1 (202 aa).

The N-terminal stretch at 1–25 is a signal peptide; it reads MDYFPVIFSLLFVTFQGAPETAVLG. A propeptide spanning residues 26–50 is cleaved from the precursor; it reads AELSTGAENGVQSPPPSTPWRPRRS. 2 disulfides stabilise this stretch: cysteine 53–cysteine 67 and cysteine 55–cysteine 63. Residues 74–202 constitute a propeptide that is removed on maturation; sequence VNTPERVVPY…DQKLTHNRAH (129 aa). Positions 110 to 124 are endothelin-like; that stretch reads CQCAHQKDKKCWNFC.

This sequence belongs to the endothelin/sarafotoxin family. As to expression, highest expression in the adult is in lung. Lower levels found in heart, kidney, brain and intestine. In the embryo, expressed in outer and inner pharyngeal arch surfaces. Also expressed in endothelium of dorsal aorta and arch arteries, and in epithelium of pharyngeal pouches.

The protein localises to the secreted. Its function is as follows. Endothelins are endothelium-derived vasoconstrictor peptides. Probable ligand for G-protein coupled receptors EDNRA and EDNRB which activates PTK2B, BCAR1, BCAR3 and, GTPases RAP1 and RHOA cascade in glomerular mesangial cells. Also binds the DEAR/FBXW7-AS1 receptor. Promotes mesenteric arterial wall remodeling via activation of ROCK signaling and subsequent colocalization of NFATC3 with F-actin filaments. NFATC3 then translocates to the nucleus where it subsequently promotes the transcription of the smooth muscle hypertrophy and differentiation marker ACTA2. The chain is Endothelin-1 (Edn1) from Mus musculus (Mouse).